An 85-amino-acid polypeptide reads, in one-letter code: Protein RALF-like 28 (85 aa).

A signal peptide spans 1–31; that stretch reads MSILKETKRFMVVAMFIACVFISNNMNVAVA. Cystine bridges form between C48–C53 and C66–C72. The disordered stretch occupies residues 60 to 85; sequence NPYHRGCEKSKRCRGPDPPALPRKMI. The span at 75–85 shows a compositional bias: pro residues; the sequence is PDPPALPRKMI.

It belongs to the plant rapid alkalinization factor (RALF) family.

The protein resides in the secreted. Functionally, cell signaling peptide that may regulate plant stress, growth, and development. Mediates a rapid alkalinization of extracellular space by mediating a transient increase in the cytoplasmic Ca(2+) concentration leading to a calcium-dependent signaling events through a cell surface receptor and a concomitant activation of some intracellular mitogen-activated protein kinases. The protein is Protein RALF-like 28 (RALFL28) of Arabidopsis thaliana (Mouse-ear cress).